A 1063-amino-acid polypeptide reads, in one-letter code: Valine--tRNA ligase, mitochondrial (1063 aa).

The N-terminal 26 residues, 1–26 (MPHLPLASFRPPFWGLRHSRGLPRFH), are a transit peptide targeting the mitochondrion. The tract at residues 25–53 (FHSVSTQSEPHGSPISRRNREAKQKRLRE) is disordered. Residues 42 to 53 (RNREAKQKRLRE) show a composition bias toward basic and acidic residues. The short motif at 146-156 (PNVTGSLHIGH) is the 'HIGH' region element. Positions 658 to 662 (KMSKS) match the 'KMSKS' region motif. K661 serves as a coordination point for ATP.

It belongs to the class-I aminoacyl-tRNA synthetase family.

The protein resides in the mitochondrion. It catalyses the reaction tRNA(Val) + L-valine + ATP = L-valyl-tRNA(Val) + AMP + diphosphate. Its function is as follows. Catalyzes the attachment of valine to tRNA(Val) in a two-step reaction: valine is first activated by ATP to form Val-AMP and then transferred to the acceptor end of tRNA(Val). The sequence is that of Valine--tRNA ligase, mitochondrial (VARS2) from Homo sapiens (Human).